The sequence spans 182 residues: MNYVPELKKYYKDSVIKELVKEFEYKSIMQVPKLEKIVVSIGVGEAVRNKKLLDSAVLELAQITGQKAVKTKAKKAIAGFKIRQGQEIGAKVTLRGNSMYEFLYKLIHLALPRVKDFRGINGDAFDGNGNYSFGISEQIIFSEIDYDKIERISGLNVTIVTTASNDKESKALLLKFGMPFSN.

Belongs to the universal ribosomal protein uL5 family. Part of the 50S ribosomal subunit; part of the 5S rRNA/L5/L18/L25 subcomplex. Contacts the 5S rRNA and the P site tRNA. Forms a bridge to the 30S subunit in the 70S ribosome.

This is one of the proteins that bind and probably mediate the attachment of the 5S RNA into the large ribosomal subunit, where it forms part of the central protuberance. In the 70S ribosome it contacts protein S13 of the 30S subunit (bridge B1b), connecting the 2 subunits; this bridge is implicated in subunit movement. Contacts the P site tRNA; the 5S rRNA and some of its associated proteins might help stabilize positioning of ribosome-bound tRNAs. In Borreliella afzelii (strain PKo) (Borrelia afzelii), this protein is Large ribosomal subunit protein uL5.